An 88-amino-acid polypeptide reads, in one-letter code: Large ribosomal subunit protein bL27 (88 aa).

Residues 1 to 13 show a composition bias toward polar residues; that stretch reads MATKKGASSSSNG. Positions 1 to 23 are disordered; that stretch reads MATKKGASSSSNGRDSEAKRLGV.

Belongs to the bacterial ribosomal protein bL27 family.

The protein is Large ribosomal subunit protein bL27 of Corynebacterium urealyticum (strain ATCC 43042 / DSM 7109).